The sequence spans 512 residues: Cytoplasmic tRNA 2-thiolation protein 2-B (512 aa).

Residues 196 to 215 (VTDSDSPGSSDKMYQSTCSR) form a disordered region. Positions 199 to 214 (SDSPGSSDKMYQSTCS) are enriched in polar residues.

This sequence belongs to the CTU2/NCS2 family.

It is found in the cytoplasm. It functions in the pathway tRNA modification; 5-methoxycarbonylmethyl-2-thiouridine-tRNA biosynthesis. In terms of biological role, plays a central role in 2-thiolation of mcm(5)S(2)U at tRNA wobble positions of tRNA(Lys), tRNA(Glu) and tRNA(Gln). May act by forming a heterodimer with ctu1/atpbd3 that ligates sulfur from thiocarboxylated urm1 onto the uridine of tRNAs at wobble position. In Xenopus laevis (African clawed frog), this protein is Cytoplasmic tRNA 2-thiolation protein 2-B (ctu2-b).